Consider the following 108-residue polypeptide: MSIFQKIKKQIQDNIILIYMKGTPEAPSCGFSAQAVQALSFCGEKFAYVNILENPDIRSELPKYANWPTFPQLWIDGELIGGCSIILEMLENGELKKLILKVKKKYQT.

Residues 4-106 (FQKIKKQIQD…KLILKVKKKY (103 aa)) enclose the Glutaredoxin domain. Position 21 (Lys-21) interacts with glutathione. Cys-29 provides a ligand contact to [2Fe-2S] cluster. Residues Arg-58, Phe-70, and 83 to 84 (CS) contribute to the glutathione site.

This sequence belongs to the glutaredoxin family. Monothiol subfamily. In terms of assembly, homodimer.

It localises to the cytoplasm. Its function is as follows. Monothiol glutaredoxin involved in the biogenesis of iron-sulfur clusters. The chain is Glutaredoxin 4 (grxD) from Buchnera aphidicola subsp. Acyrthosiphon pisum (strain APS) (Acyrthosiphon pisum symbiotic bacterium).